The primary structure comprises 85 residues: Large ribosomal subunit protein bL27 (85 aa).

Positions 1 to 10 (MAQKKGGGST) are enriched in gly residues. The tract at residues 1–20 (MAQKKGGGSTRNGRDSKPKM) is disordered.

The protein belongs to the bacterial ribosomal protein bL27 family.

This is Large ribosomal subunit protein bL27 from Acidovorax ebreus (strain TPSY) (Diaphorobacter sp. (strain TPSY)).